A 232-amino-acid chain; its full sequence is Ubiquinone biosynthesis O-methyltransferase (232 aa).

S-adenosyl-L-methionine contacts are provided by arginine 36, glycine 55, aspartate 76, and leucine 120.

The protein belongs to the methyltransferase superfamily. UbiG/COQ3 family.

It carries out the reaction a 3-demethylubiquinol + S-adenosyl-L-methionine = a ubiquinol + S-adenosyl-L-homocysteine + H(+). The enzyme catalyses a 3-(all-trans-polyprenyl)benzene-1,2-diol + S-adenosyl-L-methionine = a 2-methoxy-6-(all-trans-polyprenyl)phenol + S-adenosyl-L-homocysteine + H(+). Its pathway is cofactor biosynthesis; ubiquinone biosynthesis. Its function is as follows. O-methyltransferase that catalyzes the 2 O-methylation steps in the ubiquinone biosynthetic pathway. In Pseudomonas putida (strain GB-1), this protein is Ubiquinone biosynthesis O-methyltransferase.